Reading from the N-terminus, the 268-residue chain is Tryptophan synthase alpha chain (268 aa).

Residues E49 and D60 each act as proton acceptor in the active site.

This sequence belongs to the TrpA family. Tetramer of two alpha and two beta chains.

It catalyses the reaction (1S,2R)-1-C-(indol-3-yl)glycerol 3-phosphate + L-serine = D-glyceraldehyde 3-phosphate + L-tryptophan + H2O. Its pathway is amino-acid biosynthesis; L-tryptophan biosynthesis; L-tryptophan from chorismate: step 5/5. Its function is as follows. The alpha subunit is responsible for the aldol cleavage of indoleglycerol phosphate to indole and glyceraldehyde 3-phosphate. In Salmonella agona (strain SL483), this protein is Tryptophan synthase alpha chain.